A 244-amino-acid chain; its full sequence is Thiol S-methyltransferase TMT1B (244 aa).

The first 23 residues, 1 to 23 (MDILVPLLQLLVLLLTLPLHLMA), serve as a signal peptide directing secretion.

It belongs to the methyltransferase superfamily. As to expression, expressed in the liver.

The protein localises to the endoplasmic reticulum membrane. Its subcellular location is the lipid droplet. The protein resides in the microsome. It localises to the cytoplasm. It is found in the cytosol. The catalysed reaction is a thiol + S-adenosyl-L-methionine = a methyl thioether + S-adenosyl-L-homocysteine + H(+). In terms of biological role, thiol S-methyltransferase that catalyzes the transfer of a methyl group from S-adenosyl-L-methionine to alkyl and phenolic thiol-containing acceptor substrates. Together with TMT1B accounts for most of S-thiol methylation activity in the endoplasmic reticulum of hepatocytes. Selectively methylates S-centered nucleophiles from metabolites such as hydrogen sulfide and dithiothreitol. This Homo sapiens (Human) protein is Thiol S-methyltransferase TMT1B.